A 115-amino-acid chain; its full sequence is Insulin-like peptide IlO1_i1 (115 aa).

The N-terminal stretch at 1-20 (MFVYTTIMLLLLAEINHSQG) is a signal peptide. 3 cysteine pairs are disulfide-bonded: Cys40–Cys101, Cys52–Cys114, and Cys100–Cys105. A propeptide spans 59 to 93 (RRNRITGLDQRSIFESNLLAKRFLISRRQIVNNRR) (c peptide).

It belongs to the insulin family. Expressed in tentacles.

It is found in the secreted. Functionally, heterodimer with unknown function. Surprisingly, the truncated synthetic analog (dimer of 27-58 and 94-115) does not bind to long insulin receptor (HIR-B) and insulin-like growth factor 1 receptor. This truncated synthetic analog shows very weak inhibitory activity on different voltage-gated channels. The polypeptide is Insulin-like peptide IlO1_i1 (Oulactis sp. (Sea anemone)).